A 268-amino-acid chain; its full sequence is 4-hydroxy-tetrahydrodipicolinate reductase (268 aa).

NAD(+)-binding positions include 8-13 and D35; that span reads GAAGRM. R36 contributes to the NADP(+) binding site. Residues 99-101 and 123-126 each bind NAD(+); these read GTT and AANF. The active-site Proton donor/acceptor is H156. H157 is a (S)-2,3,4,5-tetrahydrodipicolinate binding site. The active-site Proton donor is K160. 166–167 lines the (S)-2,3,4,5-tetrahydrodipicolinate pocket; the sequence is GT.

This sequence belongs to the DapB family.

The protein resides in the cytoplasm. It catalyses the reaction (S)-2,3,4,5-tetrahydrodipicolinate + NAD(+) + H2O = (2S,4S)-4-hydroxy-2,3,4,5-tetrahydrodipicolinate + NADH + H(+). The catalysed reaction is (S)-2,3,4,5-tetrahydrodipicolinate + NADP(+) + H2O = (2S,4S)-4-hydroxy-2,3,4,5-tetrahydrodipicolinate + NADPH + H(+). The protein operates within amino-acid biosynthesis; L-lysine biosynthesis via DAP pathway; (S)-tetrahydrodipicolinate from L-aspartate: step 4/4. Its function is as follows. Catalyzes the conversion of 4-hydroxy-tetrahydrodipicolinate (HTPA) to tetrahydrodipicolinate. The chain is 4-hydroxy-tetrahydrodipicolinate reductase from Pseudomonas aeruginosa (strain LESB58).